Reading from the N-terminus, the 547-residue chain is Glucose-6-phosphate isomerase (547 aa).

The Proton donor role is filled by Glu351. Residues His382 and Lys510 contribute to the active site.

It belongs to the GPI family.

It localises to the cytoplasm. It carries out the reaction alpha-D-glucose 6-phosphate = beta-D-fructose 6-phosphate. It participates in carbohydrate biosynthesis; gluconeogenesis. It functions in the pathway carbohydrate degradation; glycolysis; D-glyceraldehyde 3-phosphate and glycerone phosphate from D-glucose: step 2/4. Functionally, catalyzes the reversible isomerization of glucose-6-phosphate to fructose-6-phosphate. The protein is Glucose-6-phosphate isomerase of Beijerinckia indica subsp. indica (strain ATCC 9039 / DSM 1715 / NCIMB 8712).